A 199-amino-acid chain; its full sequence is GTP cyclohydrolase-2 (199 aa).

49–53 (RIHSE) is a binding site for GTP. 3 residues coordinate Zn(2+): Cys54, Cys65, and Cys67. GTP-binding positions include Gln70, 92 to 94 (EGR), and Thr114. The Proton acceptor role is filled by Asp126. Arg128 (nucleophile) is an active-site residue. Thr149 and Lys154 together coordinate GTP.

This sequence belongs to the GTP cyclohydrolase II family. Homodimer. The cofactor is Zn(2+).

The catalysed reaction is GTP + 4 H2O = 2,5-diamino-6-hydroxy-4-(5-phosphoribosylamino)-pyrimidine + formate + 2 phosphate + 3 H(+). The protein operates within cofactor biosynthesis; riboflavin biosynthesis; 5-amino-6-(D-ribitylamino)uracil from GTP: step 1/4. Its function is as follows. Catalyzes the conversion of GTP to 2,5-diamino-6-ribosylamino-4(3H)-pyrimidinone 5'-phosphate (DARP), formate and pyrophosphate. This Proteus mirabilis (strain HI4320) protein is GTP cyclohydrolase-2.